The chain runs to 252 residues: Endonuclease NucS (252 aa).

The protein belongs to the NucS endonuclease family.

Its subcellular location is the cytoplasm. Cleaves both 3' and 5' ssDNA extremities of branched DNA structures. This chain is Endonuclease NucS, found in Sulfurisphaera tokodaii (strain DSM 16993 / JCM 10545 / NBRC 100140 / 7) (Sulfolobus tokodaii).